A 171-amino-acid chain; its full sequence is ATP synthase subunit b 2 (171 aa).

Residues 9-29 (APWHHPVFWVAVAFVLFFVLF) form a helical membrane-spanning segment.

This sequence belongs to the ATPase B chain family. As to quaternary structure, F-type ATPases have 2 components, F(1) - the catalytic core - and F(0) - the membrane proton channel. F(1) has five subunits: alpha(3), beta(3), gamma(1), delta(1), epsilon(1). F(0) has three main subunits: a(1), b(2) and c(10-14). The alpha and beta chains form an alternating ring which encloses part of the gamma chain. F(1) is attached to F(0) by a central stalk formed by the gamma and epsilon chains, while a peripheral stalk is formed by the delta and b chains.

The protein resides in the cell inner membrane. F(1)F(0) ATP synthase produces ATP from ADP in the presence of a proton or sodium gradient. F-type ATPases consist of two structural domains, F(1) containing the extramembraneous catalytic core and F(0) containing the membrane proton channel, linked together by a central stalk and a peripheral stalk. During catalysis, ATP synthesis in the catalytic domain of F(1) is coupled via a rotary mechanism of the central stalk subunits to proton translocation. Its function is as follows. Component of the F(0) channel, it forms part of the peripheral stalk, linking F(1) to F(0). In Granulibacter bethesdensis (strain ATCC BAA-1260 / CGDNIH1), this protein is ATP synthase subunit b 2.